The following is a 688-amino-acid chain: PTS system glucoside-specific EIICBA component (688 aa).

A PTS EIIC type-1 domain is found at 3–427 (KKLFGQLQRI…FKLKTPGRED (425 aa)). Transmembrane regions (helical) follow at residues 12–32 (IGKA…LLAF), 81–101 (LGLA…YLIM), 137–157 (LVLG…MGAL), 182–202 (FVPI…SFAW), 223–243 (LTTF…LHHI), 284–304 (AFTT…AFAI), 315–335 (IVGG…ITEP), 340–360 (FLFV…TSFL), 364–384 (LLGV…ILYG), and 395–415 (LVIP…DFAI). The PTS EIIB type-1 domain occupies 438 to 519 (AKLPFDVLDA…AKIMSGEITK (82 aa)). The active-site Phosphocysteine intermediate; for EIIB activity is Cys460. Residues 560 to 664 (DQVFAGKMMG…SIVTPMIITN (105 aa)) enclose the PTS EIIA type-1 domain. Catalysis depends on His612, which acts as the Tele-phosphohistidine intermediate; for EIIA activity.

Its subcellular location is the cell membrane. Its function is as follows. The phosphoenolpyruvate-dependent sugar phosphotransferase system (sugar PTS), a major carbohydrate active -transport system, catalyzes the phosphorylation of incoming sugar substrates concomitantly with their translocation across the cell membrane. This system is involved in alpha- and beta-glucoside transport. In Staphylococcus aureus (strain MRSA252), this protein is PTS system glucoside-specific EIICBA component (glcB).